The sequence spans 223 residues: Keratin-associated protein 5-4 (223 aa).

Repeat copies occupy residues 21–24, 27–30, 79–82, 89–92, 107–110, 117–120, 135–138, 145–148, 155–158, 173–176, 183–186, 193–196, 203–206, and 213–216. The segment at 21–216 is 14 X 4 AA repeats of C-C-X-P; the sequence is CCKPVCCCVP…CCCQSSCCAP (196 aa).

This sequence belongs to the KRTAP type 5 family. In terms of assembly, interacts with hair keratins. As to expression, expressed during the active phases of the hair cycle in the medulla and the inner root sheath of the forming hair. Also expressed in the upper layers of the epidermis of skin.

In terms of biological role, in the hair cortex, hair keratin intermediate filaments are embedded in an interfilamentous matrix, consisting of hair keratin-associated protein (KRTAP), which are essential for the formation of a rigid and resistant hair shaft through their extensive disulfide bond cross-linking with abundant cysteine residues of hair keratins. The matrix proteins include the high-sulfur and high-glycine-tyrosine keratins. This is Keratin-associated protein 5-4 from Mus musculus (Mouse).